The following is a 98-amino-acid chain: Class II hydrophobin 3 (98 aa).

The signal sequence occupies residues 1 to 18 (MQFTTTTLIAILSALAVA). 2 N-linked (GlcNAc...) asparagine glycosylation sites follow: Asn26 and Asn54. 4 cysteine pairs are disulfide-bonded: Cys35–Cys83, Cys44–Cys74, Cys45–Cys57, and Cys84–Cys95.

It belongs to the cerato-ulmin hydrophobin family.

It is found in the secreted. The protein resides in the cell wall. Its function is as follows. Aerial growth, conidiation, and dispersal of filamentous fungi in the environment rely upon a capability of their secreting small amphipathic proteins called hydrophobins (HPBs) with low sequence identity. Class I can self-assemble into an outermost layer of rodlet bundles on aerial cell surfaces, conferring cellular hydrophobicity that supports fungal growth, development and dispersal; whereas Class II form highly ordered films at water-air interfaces through intermolecular interactions but contribute nothing to the rodlet structure. In Botryotinia fuckeliana, hydrophobins are not involved in conferring surface hydrophobicity to conidia and aerial hyphae and their function in sclerotia and fruiting bodies remains to be investigated. The sequence is that of Class II hydrophobin 3 from Botryotinia fuckeliana (strain B05.10) (Noble rot fungus).